Reading from the N-terminus, the 322-residue chain is Uridylate-specific endoribonuclease EndoU (322 aa).

Residues 25-45 (FVIVGLLITIGILSWHFYEYF) traverse the membrane as a helical segment. Positions 53–322 (TPDDVLTLSK…LIGTVYPDSS (270 aa)) constitute an EndoU domain. Catalysis depends on residues His-200, His-215, and Lys-259.

This sequence belongs to the ENDOU family. Monomer. The cofactor is Mn(2+). In terms of tissue distribution, predominantly expressed in head.

The protein localises to the membrane. The enzyme catalyses a ribonucleotidyl-ribonucleotide-RNA = a 3'-end 2',3'-cyclophospho-ribonucleotide-RNA + a 5'-end dephospho-ribonucleoside-RNA. Functionally, endoribonuclease that cleaves single-stranded RNAs at uridylates and releases products that have 2'-3'-cyclic phosphate termini. Preferentially cleaves single stranded RNA at poly-U sites with CU, UC and AU sites cleaved less efficiently. May target mRNAs encoding proteins involved in lipid metabolism to regulate their expression. Regulates levels of TBPH protein, but not mRNA, by an as yet unknown mechanism. Important for neuronal development or function. This is Uridylate-specific endoribonuclease EndoU from Drosophila melanogaster (Fruit fly).